A 404-amino-acid chain; its full sequence is Synaptic vesicle membrane protein VAT-1 homolog (404 aa).

Positions 1–55 are disordered; it reads MSAEREATEAATVAAAAEARAETGAGEGAPSQPPTVEVASDPQPPPAPEASASAS. Serine 2 carries the N-acetylserine modification. Serine 2 is modified (phosphoserine). Residues 9 to 24 show a composition bias toward low complexity; that stretch reads EAATVAAAAEARAETG. 2 positions are modified to phosphoserine: serine 31 and serine 40.

Belongs to the zinc-containing alcohol dehydrogenase family. Quinone oxidoreductase subfamily. Interacts with MFN1 and MFN2. As to expression, ubiquitously expressed.

The protein localises to the cytoplasm. It is found in the mitochondrion outer membrane. Functionally, plays a part in calcium-regulated keratinocyte activation in epidermal repair mechanisms. Has no effect on cell proliferation. Possesses ATPase activity. May negatively regulate mitochondrial fusion. The chain is Synaptic vesicle membrane protein VAT-1 homolog (Vat1) from Rattus norvegicus (Rat).